The sequence spans 365 residues: Protein Wnt-6 (365 aa).

The N-terminal stretch at 1-24 (MLPPLPSRLGLLLLLLLCPAHVGG) is a signal peptide. Intrachain disulfides connect Cys-76-Cys-87, Cys-124-Cys-132, Cys-134-Cys-172, Cys-222-Cys-236, Cys-224-Cys-231, Cys-294-Cys-325, Cys-310-Cys-320, Cys-324-Cys-364, Cys-340-Cys-355, Cys-342-Cys-352, and Cys-347-Cys-348. A glycan (N-linked (GlcNAc...) asparagine) is linked at Asn-86. Residues 140–158 (RAPPRPSGLPGTPGPPGPA) are compositionally biased toward pro residues. A disordered region spans residues 140-164 (RAPPRPSGLPGTPGPPGPAGSPEGS). Residue Ser-228 is the site of O-palmitoleoyl serine; by PORCN attachment. An N-linked (GlcNAc...) asparagine glycan is attached at Asn-311.

It belongs to the Wnt family. As to quaternary structure, interacts with PORCN. In terms of processing, palmitoleoylation is required for efficient binding to frizzled receptors. Depalmitoleoylation leads to Wnt signaling pathway inhibition. As to expression, expressed in gastric cancer cell lines and gastric cancer tissues (at protein level). Detected in the apical gland region of the gastric foveolar epithelium (at protein level).

It is found in the secreted. The protein localises to the extracellular space. Its subcellular location is the extracellular matrix. In terms of biological role, ligand for members of the frizzled family of seven transmembrane receptors. Probable developmental protein. May be a signaling molecule which affects the development of discrete regions of tissues. Is likely to signal over only few cell diameters. Together with CAV1 may promote chemoresistance of gastric cancer cells to DNA-damaging anthracycline drugs through the activation of the canonical Wnt receptor signaling pathway. The polypeptide is Protein Wnt-6 (WNT6) (Homo sapiens (Human)).